We begin with the raw amino-acid sequence, 430 residues long: DNA damage-inducible protein DIN7 (430 aa).

An N-domain region spans residues M1–R96. Mg(2+)-binding residues include D30, D78, E150, D152, D171, D173, and D227. Residues N114–Y247 are I-domain.

The protein belongs to the XPG/RAD2 endonuclease family. Mg(2+) is required as a cofactor.

It is found in the nucleus. In terms of biological role, 5'-&gt;3' double-stranded DNA exonuclease. In Saccharomyces cerevisiae (strain ATCC 204508 / S288c) (Baker's yeast), this protein is DNA damage-inducible protein DIN7 (DIN7).